The sequence spans 163 residues: NADH-quinone oxidoreductase subunit I (163 aa).

2 consecutive 4Fe-4S ferredoxin-type domains span residues 54-84 (LRRY…IESD) and 94-123 (TRYD…ETPI). Residues cysteine 64, cysteine 67, cysteine 70, cysteine 74, cysteine 103, cysteine 106, cysteine 109, and cysteine 113 each coordinate [4Fe-4S] cluster.

Belongs to the complex I 23 kDa subunit family. NDH-1 is composed of 14 different subunits. Subunits NuoA, H, J, K, L, M, N constitute the membrane sector of the complex. It depends on [4Fe-4S] cluster as a cofactor.

The protein resides in the cell inner membrane. It catalyses the reaction a quinone + NADH + 5 H(+)(in) = a quinol + NAD(+) + 4 H(+)(out). NDH-1 shuttles electrons from NADH, via FMN and iron-sulfur (Fe-S) centers, to quinones in the respiratory chain. The immediate electron acceptor for the enzyme in this species is believed to be ubiquinone. Couples the redox reaction to proton translocation (for every two electrons transferred, four hydrogen ions are translocated across the cytoplasmic membrane), and thus conserves the redox energy in a proton gradient. The polypeptide is NADH-quinone oxidoreductase subunit I (Cupriavidus pinatubonensis (strain JMP 134 / LMG 1197) (Cupriavidus necator (strain JMP 134))).